The sequence spans 427 residues: Serine--tRNA ligase (427 aa).

Threonine 231–glutamate 233 serves as a coordination point for L-serine. ATP is bound at residue arginine 262–glutamate 264. Glutamate 285 is a binding site for L-serine. Glutamate 349–serine 352 is a binding site for ATP. Serine 385 provides a ligand contact to L-serine.

Belongs to the class-II aminoacyl-tRNA synthetase family. Type-1 seryl-tRNA synthetase subfamily. As to quaternary structure, homodimer. The tRNA molecule binds across the dimer.

The protein localises to the cytoplasm. It carries out the reaction tRNA(Ser) + L-serine + ATP = L-seryl-tRNA(Ser) + AMP + diphosphate + H(+). It catalyses the reaction tRNA(Sec) + L-serine + ATP = L-seryl-tRNA(Sec) + AMP + diphosphate + H(+). It participates in aminoacyl-tRNA biosynthesis; selenocysteinyl-tRNA(Sec) biosynthesis; L-seryl-tRNA(Sec) from L-serine and tRNA(Sec): step 1/1. Its function is as follows. Catalyzes the attachment of serine to tRNA(Ser). Is also able to aminoacylate tRNA(Sec) with serine, to form the misacylated tRNA L-seryl-tRNA(Sec), which will be further converted into selenocysteinyl-tRNA(Sec). The sequence is that of Serine--tRNA ligase from Hahella chejuensis (strain KCTC 2396).